The chain runs to 158 residues: NAD(P)H-quinone oxidoreductase subunit J, chloroplastic (158 aa).

Belongs to the complex I 30 kDa subunit family. As to quaternary structure, NDH is composed of at least 16 different subunits, 5 of which are encoded in the nucleus.

The protein localises to the plastid. Its subcellular location is the chloroplast thylakoid membrane. It carries out the reaction a plastoquinone + NADH + (n+1) H(+)(in) = a plastoquinol + NAD(+) + n H(+)(out). The catalysed reaction is a plastoquinone + NADPH + (n+1) H(+)(in) = a plastoquinol + NADP(+) + n H(+)(out). Its function is as follows. NDH shuttles electrons from NAD(P)H:plastoquinone, via FMN and iron-sulfur (Fe-S) centers, to quinones in the photosynthetic chain and possibly in a chloroplast respiratory chain. The immediate electron acceptor for the enzyme in this species is believed to be plastoquinone. Couples the redox reaction to proton translocation, and thus conserves the redox energy in a proton gradient. The polypeptide is NAD(P)H-quinone oxidoreductase subunit J, chloroplastic (Nuphar advena (Common spatterdock)).